The chain runs to 617 residues: Urocanate reductase (617 aa).

Thr-70 carries the post-translational modification FMN phosphoryl threonine. FAD-binding residues include Ala-124, Glu-143, Asn-151, Thr-152, Gly-156, Gly-157, and Asp-387. Arg-446 acts as the Proton donor in catalysis. FAD is bound by residues His-553, Glu-582, and Leu-598.

This sequence belongs to the FAD-dependent oxidoreductase 2 family. FRD/SDH subfamily. Requires FAD as cofactor. The cofactor is FMN.

It carries out the reaction dihydrourocanate + A = urocanate + AH2. Its function is as follows. Catalyzes the two-electron reduction of urocanate to dihydrourocanate (also named imidazole propionate or deamino-histidine). Dihydrourocanate is present at higher concentrations in subjects with type 2 diabetes, and directly impairs glucose tolerance and insulin signaling at the level of insulin receptor substrate (IRS) through activation of p38 gamma (MAPK12)-p62-mTORC1. Therefore, the UrdA enzyme from the gut bacteria L.fermentum strain NBRC 3956 may contribute to the pathogenesis of type 2 diabetes by producing the microbial metabolite dihydrourocanate. The protein is Urocanate reductase of Limosilactobacillus fermentum (strain NBRC 3956 / LMG 18251) (Lactobacillus fermentum).